Here is a 363-residue protein sequence, read N- to C-terminus: Pyrimidine monooxygenase RutA (363 aa).

Residues 49–50 (IK), Asn-115, Glu-124, 140–141 (RY), and Ser-190 each bind FMN.

This sequence belongs to the NtaA/SnaA/DszA monooxygenase family. RutA subfamily.

The catalysed reaction is uracil + FMNH2 + NADH + O2 = (Z)-3-ureidoacrylate + FMN + NAD(+) + H2O + H(+). The enzyme catalyses thymine + FMNH2 + NADH + O2 = (Z)-2-methylureidoacrylate + FMN + NAD(+) + H2O + H(+). Its function is as follows. Catalyzes the pyrimidine ring opening between N-3 and C-4 by an unusual flavin hydroperoxide-catalyzed mechanism, adding oxygen atoms in the process to yield ureidoacrylate peracid, that immediately reacts with FMN forming ureidoacrylate and FMN-N(5)-oxide. The FMN-N(5)-oxide reacts spontaneously with NADH to produce FMN. Requires the flavin reductase RutF to regenerate FMN in vivo. This Escherichia coli O6:K15:H31 (strain 536 / UPEC) protein is Pyrimidine monooxygenase RutA.